Reading from the N-terminus, the 61-residue chain is Small ribosomal subunit protein uS14 (61 aa).

4 residues coordinate Zn(2+): C24, C27, C40, and C43.

Belongs to the universal ribosomal protein uS14 family. Zinc-binding uS14 subfamily. Part of the 30S ribosomal subunit. Contacts proteins S3 and S10. It depends on Zn(2+) as a cofactor.

Functionally, binds 16S rRNA, required for the assembly of 30S particles and may also be responsible for determining the conformation of the 16S rRNA at the A site. The polypeptide is Small ribosomal subunit protein uS14 (Frankia alni (strain DSM 45986 / CECT 9034 / ACN14a)).